Here is a 166-residue protein sequence, read N- to C-terminus: Small ribosomal subunit protein uS5 (166 aa).

The region spanning leucine 11 to valine 74 is the S5 DRBM domain.

Belongs to the universal ribosomal protein uS5 family. As to quaternary structure, part of the 30S ribosomal subunit. Contacts proteins S4 and S8.

Functionally, with S4 and S12 plays an important role in translational accuracy. Located at the back of the 30S subunit body where it stabilizes the conformation of the head with respect to the body. The sequence is that of Small ribosomal subunit protein uS5 from Histophilus somni (strain 2336) (Haemophilus somnus).